The following is a 198-amino-acid chain: Probable thymidylate kinase (198 aa).

An ATP-binding site is contributed by 9–16 (GIDGSGKT).

It belongs to the thymidylate kinase family.

The catalysed reaction is dTMP + ATP = dTDP + ADP. The protein is Probable thymidylate kinase of Methanococcus vannielii (strain ATCC 35089 / DSM 1224 / JCM 13029 / OCM 148 / SB).